We begin with the raw amino-acid sequence, 592 residues long: Insulin-like growth factor 2 mRNA-binding protein 2 (592 aa).

2 RRM domains span residues 3–76 and 82–157; these read NKLY…YSVS and RRIQ…YIPD. A Phosphoserine modification is found at Ser11. A disordered region spans residues 157 to 182; sequence DEEVSSPSPPHRAREQGHGPGSSSQA. A phosphoserine mark is found at Ser162 and Ser164. 4 consecutive KH domains span residues 186-251, 267-334, 420-485, and 502-568; these read DFPL…CRMI, EVPL…EIEI, QETV…QGRI, and KLEA…QRKI. Position 543 is a phosphothreonine (Thr543).

Belongs to the RRM IMP/VICKZ family. In terms of assembly, can form homooligomers and heterooligomers with IGF2BP1 and IGF2BP3 in an RNA-dependent manner. Interacts with HNRPD. Interacts with IGF2BP1. Interacts with ELAVL1, DHX9, HNRNPU, MATR3 and PABPC1. Expressed in oocytes, granulosa cells of small and growing follicles and Leydig cells of the testis (at protein level). Expressed in testis and ovary.

The protein localises to the nucleus. The protein resides in the cytoplasm. It localises to the P-body. Its subcellular location is the stress granule. RNA-binding factor that recruits target transcripts to cytoplasmic protein-RNA complexes (mRNPs). This transcript 'caging' into mRNPs allows mRNA transport and transient storage. It also modulates the rate and location at which target transcripts encounter the translational apparatus and shields them from endonuclease attacks or microRNA-mediated degradation. Preferentially binds to N6-methyladenosine (m6A)-containing mRNAs and increases their stability. Binds to the 5'-UTR of the insulin-like growth factor 2 (IGF2) mRNAs. Binding is isoform-specific. Binds to beta-actin/ACTB and MYC transcripts. Increases MYC mRNA stability by binding to the coding region instability determinant (CRD) and binding is enhanced by m6A-modification of the CRD. The polypeptide is Insulin-like growth factor 2 mRNA-binding protein 2 (Igf2bp2) (Mus musculus (Mouse)).